Reading from the N-terminus, the 362-residue chain is 3-dehydroquinate synthase (362 aa).

NAD(+) contacts are provided by residues 74-79, 108-112, 132-133, lysine 145, lysine 154, and 172-175; these read DGEGYK, GVIGD, TT, and TLDT. The Zn(2+) site is built by glutamate 187, histidine 250, and histidine 267.

This sequence belongs to the sugar phosphate cyclases superfamily. Dehydroquinate synthase family. Requires Co(2+) as cofactor. It depends on Zn(2+) as a cofactor. NAD(+) serves as cofactor.

It is found in the cytoplasm. It catalyses the reaction 7-phospho-2-dehydro-3-deoxy-D-arabino-heptonate = 3-dehydroquinate + phosphate. It participates in metabolic intermediate biosynthesis; chorismate biosynthesis; chorismate from D-erythrose 4-phosphate and phosphoenolpyruvate: step 2/7. In terms of biological role, catalyzes the conversion of 3-deoxy-D-arabino-heptulosonate 7-phosphate (DAHP) to dehydroquinate (DHQ). The protein is 3-dehydroquinate synthase of Geobacter sp. (strain M21).